Here is a 613-residue protein sequence, read N- to C-terminus: ATP-dependent RNA helicase DeaD (613 aa).

The Q motif motif lies at 5-33 (ITFNDLGLPEFILKAVSDLGFETPSPIQQ). The Helicase ATP-binding domain maps to 36–207 (IPHLLNGNDV…KRFMNDPQEV (172 aa)). 49-56 (AQTGSGKT) provides a ligand contact to ATP. The DEAD box motif lies at 155–158 (DEAD). One can recognise a Helicase C-terminal domain in the interval 231 to 378 (KNEALLRFLE…EVELPNHLVL (148 aa)). Disordered stretches follow at residues 434-476 (ILPP…PQPM) and 552-613 (AVKS…RSSF). Composition is skewed to basic and acidic residues over residues 440 to 469 (PMEK…ERKG) and 556 to 613 (DNSR…RSSF).

Belongs to the DEAD box helicase family. DeaD/CsdA subfamily.

The protein resides in the cytoplasm. The catalysed reaction is ATP + H2O = ADP + phosphate + H(+). Functionally, DEAD-box RNA helicase involved in various cellular processes at low temperature, including ribosome biogenesis, mRNA degradation and translation initiation. This chain is ATP-dependent RNA helicase DeaD, found in Haemophilus influenzae (strain ATCC 51907 / DSM 11121 / KW20 / Rd).